The following is a 181-amino-acid chain: Inner kinetochore subunit MCM16 (181 aa).

A coiled-coil region spans residues 112 to 171 (KQLIESRAERDELMSKLIELSSKFPKPTIPPDDSDTAGKQVEVEKENETIQELMIALQIH).

It belongs to the CENP-H/MCM16 family. Component of the heterotrimeric kinetochore subcomplex CTF3, which consists of CTF3, MCM16 and MCM22. The CTF3 subcomplex is part of a larger constitutive centromere-associated network (CCAN) (also known as central kinetochore CTF19 complex in yeast), which is composed of at least AME1, CHL4, CNN1, CTF3, CTF19, IML3, MCM16, MCM21, MCM22, MHF1, MHF2, MIF2, NKP1, NKP2, OKP1 and WIP1. Interacts with CTF19.

Its subcellular location is the nucleus. The protein localises to the chromosome. It is found in the centromere. It localises to the kinetochore. Component of the kinetochore, a multiprotein complex that assembles on centromeric DNA and attaches chromosomes to spindle microtubules, mediating chromosome segregation and sister chromatid segregation during meiosis and mitosis. Component of the inner kinetochore constitutive centromere-associated network (CCAN), which serves as a structural platform for outer kinetochore assembly. The sequence is that of Inner kinetochore subunit MCM16 (MCM16) from Saccharomyces cerevisiae (strain ATCC 204508 / S288c) (Baker's yeast).